The chain runs to 289 residues: Geranylgeranyl diphosphate synthase (289 aa).

Residues arginine 43 and histidine 73 each coordinate isopentenyl diphosphate. Positions 80 and 86 each coordinate Mg(2+). Arginine 91 contributes to the (2E,6E)-farnesyl diphosphate binding site. Arginine 92 contributes to the isopentenyl diphosphate binding site. Residues lysine 170, threonine 171, and glutamine 205 each coordinate (2E,6E)-farnesyl diphosphate.

Belongs to the FPP/GGPP synthase family. Mg(2+) serves as cofactor.

It catalyses the reaction isopentenyl diphosphate + (2E,6E)-farnesyl diphosphate = (2E,6E,10E)-geranylgeranyl diphosphate + diphosphate. It participates in isoprenoid biosynthesis; geranylgeranyl diphosphate biosynthesis; geranylgeranyl diphosphate from farnesyl diphosphate and isopentenyl diphosphate: step 1/1. In terms of biological role, catalyzes the condensation of farnesyl diphosphate (FPP) and isopentenyl diphosphate (IPP) to yield geranylgeranyl diphosphate (GGPP) needed for biosynthesis of carotenoids and diterpenes. The chain is Geranylgeranyl diphosphate synthase (crtE) from Rhodobacter capsulatus (strain ATCC BAA-309 / NBRC 16581 / SB1003).